Consider the following 155-residue polypeptide: Myosin light chain alkali (155 aa).

2 EF-hand domains span residues 7-41 (REIE…LNLN) and 80-115 (GCYE…LGES).

As to quaternary structure, myosin is a hexamer of 2 heavy chains and 4 light chains.

This is Myosin light chain alkali (Mlc1) from Drosophila pseudoobscura pseudoobscura (Fruit fly).